Reading from the N-terminus, the 342-residue chain is Ketol-acid reductoisomerase (NADP(+)) (342 aa).

The KARI N-terminal Rossmann domain occupies 2-182 (AKIYYDDDAD…GGLRAGGIET (181 aa)). Residues 25-28 (YGSQ), R48, S51, S53, and 83-86 (DQNQ) contribute to the NADP(+) site. The active site involves H108. G134 is a binding site for NADP(+). Residues 183 to 328 (SFREETETDL…KELRKMYSWL (146 aa)) form the KARI C-terminal knotted domain. Residues D191, E195, E227, and E231 each contribute to the Mg(2+) site. Residue S252 participates in substrate binding.

Belongs to the ketol-acid reductoisomerase family. Mg(2+) serves as cofactor.

The catalysed reaction is (2R)-2,3-dihydroxy-3-methylbutanoate + NADP(+) = (2S)-2-acetolactate + NADPH + H(+). It carries out the reaction (2R,3R)-2,3-dihydroxy-3-methylpentanoate + NADP(+) = (S)-2-ethyl-2-hydroxy-3-oxobutanoate + NADPH + H(+). It participates in amino-acid biosynthesis; L-isoleucine biosynthesis; L-isoleucine from 2-oxobutanoate: step 2/4. The protein operates within amino-acid biosynthesis; L-valine biosynthesis; L-valine from pyruvate: step 2/4. Its function is as follows. Involved in the biosynthesis of branched-chain amino acids (BCAA). Catalyzes an alkyl-migration followed by a ketol-acid reduction of (S)-2-acetolactate (S2AL) to yield (R)-2,3-dihydroxy-isovalerate. In the isomerase reaction, S2AL is rearranged via a Mg-dependent methyl migration to produce 3-hydroxy-3-methyl-2-ketobutyrate (HMKB). In the reductase reaction, this 2-ketoacid undergoes a metal-dependent reduction by NADPH to yield (R)-2,3-dihydroxy-isovalerate. This Cutibacterium acnes (strain DSM 16379 / KPA171202) (Propionibacterium acnes) protein is Ketol-acid reductoisomerase (NADP(+)).